The primary structure comprises 157 residues: Ribosomal RNA large subunit methyltransferase H (157 aa).

Residues Leu73, Gly105, and 124–129 (LSRMTF) contribute to the S-adenosyl-L-methionine site.

Belongs to the RNA methyltransferase RlmH family. In terms of assembly, homodimer.

The protein resides in the cytoplasm. It carries out the reaction pseudouridine(1915) in 23S rRNA + S-adenosyl-L-methionine = N(3)-methylpseudouridine(1915) in 23S rRNA + S-adenosyl-L-homocysteine + H(+). In terms of biological role, specifically methylates the pseudouridine at position 1915 (m3Psi1915) in 23S rRNA. This chain is Ribosomal RNA large subunit methyltransferase H, found in Porphyromonas gingivalis (strain ATCC 33277 / DSM 20709 / CIP 103683 / JCM 12257 / NCTC 11834 / 2561).